Reading from the N-terminus, the 296-residue chain is Large ribosomal subunit protein uL15m (296 aa).

The N-terminal 20 residues, 1 to 20 (MSLIKKPGGKTIEVVKNLPR), are a transit peptide targeting the mitochondrion. Positions 25–59 (NLRPNPGAKTLEKRRGRGMHGGNRSGWGHKGERQR) are disordered.

Belongs to the universal ribosomal protein uL15 family. In terms of assembly, component of the mitochondrial ribosome large subunit (39S) which comprises a 16S rRNA and about 50 distinct proteins.

Its subcellular location is the mitochondrion. In Danio rerio (Zebrafish), this protein is Large ribosomal subunit protein uL15m (mrpl15).